The sequence spans 174 residues: Protein RESISTANCE TO POWDERY MILDEW 8.2 (174 aa).

An RPW8 domain is found at 1 to 153; that stretch reads MIAEVAAGGA…IMPQPKFEIH (153 aa). The chain crosses the membrane as a helical span at residues 7 to 23; sequence AGGALGLALSVLHEAVK. Positions 68–145 form a coiled coil; that stretch reads VNKRLKLLLE…EISTKLDKIM (78 aa).

This sequence belongs to the plant RPW8 protein family.

Its subcellular location is the membrane. Disease resistance (R) protein that induces localized, salicylic acid-dependent defenses. Confers resistance to powdery mildew (e.g. Erysiphe cichoracearum UCSC1). This is Protein RESISTANCE TO POWDERY MILDEW 8.2 from Arabidopsis thaliana (Mouse-ear cress).